The chain runs to 634 residues: DNA-directed RNA polymerase subunit gamma (634 aa).

Zn(2+) contacts are provided by Cys74, Cys76, Cys89, and Cys92. Mg(2+) is bound by residues Asp471, Asp473, and Asp475.

The protein belongs to the RNA polymerase beta' chain family. RpoC1 subfamily. In terms of assembly, in cyanobacteria the RNAP catalytic core is composed of 2 alpha, 1 beta, 1 beta', 1 gamma and 1 omega subunit. When a sigma factor is associated with the core the holoenzyme is formed, which can initiate transcription. It depends on Mg(2+) as a cofactor. Zn(2+) serves as cofactor.

It carries out the reaction RNA(n) + a ribonucleoside 5'-triphosphate = RNA(n+1) + diphosphate. Functionally, DNA-dependent RNA polymerase catalyzes the transcription of DNA into RNA using the four ribonucleoside triphosphates as substrates. The polypeptide is DNA-directed RNA polymerase subunit gamma (Synechococcus sp. (strain WH7803)).